A 429-amino-acid chain; its full sequence is Glutamate-1-semialdehyde 2,1-aminomutase 2 (429 aa).

Lys-267 is subject to N6-(pyridoxal phosphate)lysine.

The protein belongs to the class-III pyridoxal-phosphate-dependent aminotransferase family. HemL subfamily. Homodimer. It depends on pyridoxal 5'-phosphate as a cofactor.

Its subcellular location is the cytoplasm. It catalyses the reaction (S)-4-amino-5-oxopentanoate = 5-aminolevulinate. The protein operates within porphyrin-containing compound metabolism; protoporphyrin-IX biosynthesis; 5-aminolevulinate from L-glutamyl-tRNA(Glu): step 2/2. The protein is Glutamate-1-semialdehyde 2,1-aminomutase 2 (gsaB) of Bacillus subtilis (strain 168).